The primary structure comprises 80 residues: Exodeoxyribonuclease 7 small subunit (80 aa).

This sequence belongs to the XseB family. As to quaternary structure, heterooligomer composed of large and small subunits.

Its subcellular location is the cytoplasm. It carries out the reaction Exonucleolytic cleavage in either 5'- to 3'- or 3'- to 5'-direction to yield nucleoside 5'-phosphates.. Its function is as follows. Bidirectionally degrades single-stranded DNA into large acid-insoluble oligonucleotides, which are then degraded further into small acid-soluble oligonucleotides. This is Exodeoxyribonuclease 7 small subunit from Escherichia coli (strain SE11).